Reading from the N-terminus, the 704-residue chain is Lebercilin (704 aa).

A compositionally biased stretch (basic and acidic residues) spans 1 to 14 (MGERARSPDIEQGK). The disordered stretch occupies residues 1 to 80 (MGERARSPDI…VSPKAVPSKK (80 aa)). Phosphoserine is present on Ser-7. The segment covering 25 to 40 (SSDLGSSPQSSGPSSP) has biased composition (low complexity). Ser-48 carries the phosphoserine modification. The segment covering 49–63 (TREKNPKRHLSDNQV) has biased composition (basic and acidic residues). A coiled-coil region spans residues 105-300 (KRVLSARLLK…KEKELDIKNI (196 aa)). 2 disordered regions span residues 389-417 (QEGK…AREE) and 476-661 (ELQD…GDEE). Residues 404 to 417 (QEARKPESEWAREE) show a composition bias toward basic and acidic residues. Residues 448-479 (AQSVDKFEDEAERLKTEMLLAKLNEINKELQD) are a coiled coil. The span at 496–505 (SKLHSPDRST) shows a compositional bias: basic and acidic residues. The span at 570–591 (GKSNPPSQKSSLLDFQSNSSES) shows a compositional bias: polar residues. A compositionally biased stretch (basic and acidic residues) spans 592–608 (PSKDSLDLMSRKEKKAT). Over residues 617–627 (SASNTSVSSKS) the composition is skewed to low complexity.

It belongs to the LCA5 family. Interacts with NINL. Interacts with OFD1. Interacts with FAM161A. Interacts with components of the IFT complex B. As to expression, detected in several tissues.

The protein resides in the cytoplasm. The protein localises to the cytoskeleton. Its subcellular location is the cilium axoneme. It localises to the cilium basal body. It is found in the cell projection. The protein resides in the cilium. Involved in intraflagellar protein (IFT) transport in photoreceptor cilia. This chain is Lebercilin (Lca5), found in Mus musculus (Mouse).